The primary structure comprises 62 residues: 6.7 kDa chloroplast outer envelope membrane protein (62 aa).

Residues 1 to 17 are Chloroplast intermembrane-facing; that stretch reads MESVAKPATTKEGSAKQ. The helical transmembrane segment at 18 to 40 threads the bilayer; sequence AAIVVGVLALGWFAIQVAFIPLF. Over 41–62 the chain is Cytoplasmic; sequence NKVRGGGSDKKDDDVNAFTPDT.

Its subcellular location is the plastid. The protein localises to the chloroplast outer membrane. The sequence is that of 6.7 kDa chloroplast outer envelope membrane protein from Spinacia oleracea (Spinach).